The following is a 145-amino-acid chain: UPF0179 protein TV1250 (145 aa).

This sequence belongs to the UPF0179 family.

The polypeptide is UPF0179 protein TV1250 (Thermoplasma volcanium (strain ATCC 51530 / DSM 4299 / JCM 9571 / NBRC 15438 / GSS1)).